A 296-amino-acid chain; its full sequence is DNA-3-methyladenine glycosylase (296 aa).

At S110 the chain carries Phosphoserine. The Proton acceptor role is filled by D209.

This sequence belongs to the alkylbase DNA glycosidase AlkA family.

It localises to the nucleus. It catalyses the reaction Hydrolysis of alkylated DNA, releasing 3-methyladenine, 3-methylguanine, 7-methylguanine and 7-methyladenine.. Hydrolysis of the deoxyribose N-glycosidic bond to excise 3-methyladenine or 7-methyladenine from the damaged DNA polymer formed by alkylation lesions. The protein is DNA-3-methyladenine glycosylase (MAG1) of Saccharomyces cerevisiae (strain ATCC 204508 / S288c) (Baker's yeast).